Reading from the N-terminus, the 469-residue chain is Mitochondrial adenyl nucleotide antiporter SLC25A25 (469 aa).

A regulatory N-terminal domain region spans residues 1 to 165; it reads MLCLCLYVPI…LYWKHSTIFD (165 aa). Residues 1 to 189 are Mitochondrial intermembrane-facing; sequence MLCLCLYVPI…ERQTGMWWRH (189 aa). 3 EF-hand domains span residues 47-80, 78-113, and 114-149; these read TYRQ…QDHE, DHEK…LGVK, and ISEQ…HPVE. The Ca(2+) site is built by D60, D62, D64, Q66, and E71. Residues 151-160 are linker region; sequence IPEIILYWKH. The interval 166-469 is C-terminal transmembrane transporter domain; that stretch reads VGENLTVPDE…LKITLGVQSR (304 aa). Solcar repeat units lie at residues 184 to 270, 278 to 363, and 375 to 463; these read GMWW…MKRL, LRIH…LKNT, and PGVF…LKIT. Residues 190–207 form a helical membrane-spanning segment; the sequence is LVAGGGAGAVSRTCTAPL. The Mitochondrial matrix segment spans residues 208–244; the sequence is DRLKVLMQVHASRSNNMCIVGGFTQMIREGGAKSLWR. The helical transmembrane segment at 245–264 threads the bilayer; sequence GNGINVLKIAPESAIKFMAY. Residues 265–287 lie on the Mitochondrial intermembrane side of the membrane; the sequence is EQMKRLVGSDQETLRIHERLVAG. A helical membrane pass occupies residues 288–301; it reads SLAGAIAQSSIYPM. Residues 302-337 are Mitochondrial matrix-facing; sequence EVLKTRMALRKTGQYSGMLDCARRILAKEGVAAFYK. A helical transmembrane segment spans residues 338–357; that stretch reads GYIPNMLGIIPYAGIDLAVY. At 358–380 the chain is on the mitochondrial intermembrane side; that stretch reads ETLKNTWLQRYAVNSADPGVFVL. Residues 381–398 traverse the membrane as a helical segment; sequence LACGTISSTCGQLASYPL. The Mitochondrial matrix portion of the chain corresponds to 399-437; it reads ALVRTRMQAQASIEGAPEVTMSSLFKQILRTEGAFGLYR. Residues 438–457 traverse the membrane as a helical segment; sequence GLAPNFMKVIPAVSISYVVY. Residues 458–469 lie on the Mitochondrial intermembrane side of the membrane; that stretch reads ENLKITLGVQSR.

The protein belongs to the mitochondrial carrier (TC 2.A.29) family.

The protein resides in the mitochondrion inner membrane. It catalyses the reaction Mg(2+)(out) + phosphate(in) + ATP(out) = Mg(2+)(in) + phosphate(out) + ATP(in). Its activity is regulated as follows. Activated by an increase in cytosolic calcium levels that induce a conformational change of the N-terminal regulatory domain, uncapping the channel and allowing transport. Functionally, electroneutral antiporter that most probably mediates the transport of adenyl nucleotides through the inner mitochondrial membrane. Originally identified as an ATP-magnesium/inorganic phosphate antiporter, it could have a broader specificity for adenyl nucleotides. By regulating the mitochondrial matrix adenyl nucleotide pool could adapt to changing cellular energetic demands and indirectly regulate adenyl nucleotide-dependent metabolic pathways. The protein is Mitochondrial adenyl nucleotide antiporter SLC25A25 of Mus musculus (Mouse).